A 291-amino-acid chain; its full sequence is Verruculogen synthase (291 aa).

Residue Tyr68 is part of the active site.

Belongs to the PhyH family. Homodimer. Fe cation is required as a cofactor.

It catalyses the reaction fumitremorgin B + 2-oxoglutarate + AH2 + 2 O2 = verruculogen + succinate + A + CO2 + H2O. Its pathway is mycotoxin biosynthesis. In terms of biological role, verruculogen synthase; part of the gene cluster that mediates the biosynthesis of fumitremorgins, indole alkaloids that carry not only intriguing chemical structures, but also interesting biological and pharmacological activities. The biosynthesis of fumitremorgin-type alkaloids begins by condensation of the two amino acids L-tryptophan and L-proline to brevianamide F, catalyzed by the non-ribosomal peptide synthetase ftmA. Brevianamide F is then prenylated by the prenyltransferase ftmPT1/ftmB in the presence of dimethylallyl diphosphate, resulting in the formation of tryprostatin B. The three cytochrome P450 monooxygenases, ftmP450-1/ftmC, ftmP450-2/ftmE and ftmP450-3/FtmG, are responsible for the conversion of tryprostatin B to 6-hydroxytryprostatin B, tryprostatin A to fumitremorgin C and fumitremorgin C to 12,13-dihydroxyfumitremorgin C, respectively. The putative methyltransferase ftmMT/ftmD is expected for the conversion of 6-hydroxytryprostatin B to tryprostatin A. FtmPT2/FtmH catalyzes the prenylation of 12,13-dihydroxyfumitre-morgin C in the presence of dimethylallyl diphosphate, resulting in the formation of fumitremorgin B. Fumitremorgin B is further converted to verruculogen by ftmOx1/ftmF via the insertion of an endoperoxide bond between the two prenyl moieties. In some fungal species, verruculogen is further converted to fumitremorgin A, but the enzymes involved in this step have not been identified yet. This chain is Verruculogen synthase, found in Aspergillus fumigatus (Neosartorya fumigata).